The sequence spans 418 residues: Light-independent protochlorophyllide reductase subunit N (418 aa).

[4Fe-4S] cluster is bound by residues Cys17, Cys42, and Cys103.

This sequence belongs to the BchN/ChlN family. In terms of assembly, protochlorophyllide reductase is composed of three subunits; ChlL, ChlN and ChlB. Forms a heterotetramer of two ChlB and two ChlN subunits. It depends on [4Fe-4S] cluster as a cofactor.

It carries out the reaction chlorophyllide a + oxidized 2[4Fe-4S]-[ferredoxin] + 2 ADP + 2 phosphate = protochlorophyllide a + reduced 2[4Fe-4S]-[ferredoxin] + 2 ATP + 2 H2O. Its pathway is porphyrin-containing compound metabolism; chlorophyll biosynthesis (light-independent). Component of the dark-operative protochlorophyllide reductase (DPOR) that uses Mg-ATP and reduced ferredoxin to reduce ring D of protochlorophyllide (Pchlide) to form chlorophyllide a (Chlide). This reaction is light-independent. The NB-protein (ChlN-ChlB) is the catalytic component of the complex. This chain is Light-independent protochlorophyllide reductase subunit N, found in Prochlorococcus marinus (strain MIT 9215).